The sequence spans 429 residues: Adenylosuccinate synthetase (429 aa).

GTP is bound by residues Gly12–Lys18 and Gly40–Thr42. Asp13 serves as the catalytic Proton acceptor. Mg(2+)-binding residues include Asp13 and Gly40. IMP-binding positions include Asp13–Lys16, Asn38–His41, Thr128, Arg142, Gln223, Thr238, and Arg302. His41 (proton donor) is an active-site residue. Thr298–Arg304 contributes to the substrate binding site. GTP contacts are provided by residues Arg304, Ser330–Asp332, and Ser412–Gly414.

Belongs to the adenylosuccinate synthetase family. Homodimer. It depends on Mg(2+) as a cofactor.

The protein localises to the cytoplasm. It catalyses the reaction IMP + L-aspartate + GTP = N(6)-(1,2-dicarboxyethyl)-AMP + GDP + phosphate + 2 H(+). It participates in purine metabolism; AMP biosynthesis via de novo pathway; AMP from IMP: step 1/2. In terms of biological role, plays an important role in the de novo pathway of purine nucleotide biosynthesis. Catalyzes the first committed step in the biosynthesis of AMP from IMP. The chain is Adenylosuccinate synthetase from Bacillus cytotoxicus (strain DSM 22905 / CIP 110041 / 391-98 / NVH 391-98).